We begin with the raw amino-acid sequence, 185 residues long: Ribosome-recycling factor (185 aa).

This sequence belongs to the RRF family.

The protein resides in the cytoplasm. Its function is as follows. Responsible for the release of ribosomes from messenger RNA at the termination of protein biosynthesis. May increase the efficiency of translation by recycling ribosomes from one round of translation to another. This is Ribosome-recycling factor from Sulfurovum sp. (strain NBC37-1).